The primary structure comprises 1394 residues: ATP-dependent permease AUS1 (1394 aa).

At 1-420 (MSISKYFTPV…PLTTIGSYSR (420 aa)) the chain is on the cytoplasmic side. In terms of domain architecture, ABC transporter 1 spans 33–273 (KKSYDAEDSM…FRDTLGIEKD (241 aa)). The next 6 helical transmembrane spans lie at 421-443 (GSLT…PIAF), 468-490 (TVFD…YFLA), 497-519 (ARFF…LFAL), 529-551 (VANL…VIYL), 558-575 (FVWI…EAIL), and 636-658 (VWRN…LFAS). Topologically, residues 659 to 1080 (QYIKPYFNKD…QYICTKRDMT (422 aa)) are cytoplasmic. The region spanning 751–978 (ISWKNINYTV…YFMSHDNTLV (228 aa)) is the ABC transporter 2 domain. 782–789 (GESGAGKT) contributes to the ATP binding site. A run of 6 helical transmembrane segments spans residues 1081 to 1103 (YVMA…FWHI), 1107 to 1129 (IIGL…PLIN), 1156 to 1178 (VLLL…LFFV), 1193 to 1215 (AGVF…LWLI), 1224 to 1246 (AAVF…QPYS), and 1346 to 1368 (FGIE…YLTY). The Cytoplasmic segment spans residues 1369 to 1394 (VARIWPKVFKIITKVIPHRGKKPVQN).

Belongs to the ABC transporter superfamily. ABCG family. PDR (TC 3.A.1.205) subfamily.

The protein resides in the membrane. Its function is as follows. Transporter involved in the uptake of sterol. The sequence is that of ATP-dependent permease AUS1 (AUS1) from Saccharomyces cerevisiae (strain ATCC 204508 / S288c) (Baker's yeast).